We begin with the raw amino-acid sequence, 591 residues long: Aspartate--tRNA ligase (591 aa).

Glutamate 173 contacts L-aspartate. An aspartate region spans residues 197-200 (QLFK). Arginine 219 contacts L-aspartate. ATP is bound by residues 219–221 (RDE) and glutamine 228. Histidine 448 serves as a coordination point for L-aspartate. Glutamate 482 lines the ATP pocket. L-aspartate is bound at residue arginine 489. Residue 534–537 (GLDR) coordinates ATP.

It belongs to the class-II aminoacyl-tRNA synthetase family. Type 1 subfamily. In terms of assembly, homodimer.

Its subcellular location is the cytoplasm. It carries out the reaction tRNA(Asp) + L-aspartate + ATP = L-aspartyl-tRNA(Asp) + AMP + diphosphate. In terms of biological role, catalyzes the attachment of L-aspartate to tRNA(Asp) in a two-step reaction: L-aspartate is first activated by ATP to form Asp-AMP and then transferred to the acceptor end of tRNA(Asp). This is Aspartate--tRNA ligase from Shewanella frigidimarina (strain NCIMB 400).